The primary structure comprises 173 residues: Regulator of ribonuclease activity A (173 aa).

Belongs to the RraA family. In terms of assembly, homotrimer. Binds to both RNA-binding sites in the C-terminal region of Rne and to RhlB.

It localises to the cytoplasm. Its function is as follows. Globally modulates RNA abundance by binding to RNase E (Rne) and regulating its endonucleolytic activity. Can modulate Rne action in a substrate-dependent manner by altering the composition of the degradosome. Modulates RNA-binding and helicase activities of the degradosome. In Vibrio vulnificus (strain CMCP6), this protein is Regulator of ribonuclease activity A.